A 385-amino-acid polypeptide reads, in one-letter code: T-box transcription factor TBX10 (385 aa).

Positions 22–61 (TTSSGWEPRLGSPFPSGPCTSSTGAQAVAEPTGQGPKNPR) are disordered. Residues 69–252 (LEMKPLWEEF…SNPFAKGFRE (184 aa)) constitute a DNA-binding region (T-box).

Its subcellular location is the nucleus. Functionally, probable transcriptional regulator involved in developmental processes. This chain is T-box transcription factor TBX10 (TBX10), found in Homo sapiens (Human).